Reading from the N-terminus, the 922-residue chain is Golgi-associated RAB2 interactor protein 5B (922 aa).

Disordered stretches follow at residues 244–264 (DVRKKPAEKKSHSDPRPDRTH), 292–317 (QSSPKACTSASDEATGQGHVVESPSH), 373–404 (TPYSSIPRGREKAGPMGSHQGPGPPPCQKAPS), 424–597 (AVPA…TQET), 758–830 (QPES…LRPS), and 842–869 (ATARASQQPKRVSQEPMRMPAQHPLATV). Polar residues predominate over residues 292–305 (QSSPKACTSASDEA). Positions 431 to 441 (KPPPGLAPPQK) are enriched in pro residues. 2 stretches are compositionally biased toward low complexity: residues 442-458 (APAASAPPRKAPAVPAP) and 471-495 (KAPAIPAPSRKASAASASPRKASAV). Pro residues predominate over residues 496–507 (PAPPQKTPPPSQ). The segment covering 758–788 (QPESHTWVKEGKRPWGEMKEQPWGEMKEPPW) has biased composition (basic and acidic residues).

The protein belongs to the GARIN family.

The chain is Golgi-associated RAB2 interactor protein 5B from Homo sapiens (Human).